The chain runs to 420 residues: 3-isopropylmalate dehydratase large subunit (420 aa).

[4Fe-4S] cluster-binding residues include C300, C360, and C363.

It belongs to the aconitase/IPM isomerase family. LeuC type 2 subfamily. In terms of assembly, heterodimer of LeuC and LeuD. The cofactor is [4Fe-4S] cluster.

It carries out the reaction (2R,3S)-3-isopropylmalate = (2S)-2-isopropylmalate. Its pathway is amino-acid biosynthesis; L-leucine biosynthesis; L-leucine from 3-methyl-2-oxobutanoate: step 2/4. Catalyzes the isomerization between 2-isopropylmalate and 3-isopropylmalate, via the formation of 2-isopropylmaleate. The chain is 3-isopropylmalate dehydratase large subunit from Clostridium kluyveri (strain ATCC 8527 / DSM 555 / NBRC 12016 / NCIMB 10680 / K1).